Consider the following 73-residue polypeptide: uncharacterized protein (73 aa).

This is an uncharacterized protein from Saccharomyces cerevisiae (strain ATCC 204508 / S288c) (Baker's yeast).